The sequence spans 592 residues: MIDLSTMKQQIETLLNQAIERLKTKGVLKPEVTPVIKITHTTDPQHGDFATNLALTLSKAAGMSPHALAEKIVEALPPSGQITEVEIAGPGFINFFVTEGSYQTVVSSILKAGKDYGRSEMGKGQRVHMEYVSANPTGPLHVGHGRGAAYGACVANLLNAAGFEVHREYYVNDAGRQMGILALSVWVRYLQGYEASIELPKNAYQGEYIIDIAEALKAKYGKQFYHSVESIQAKIPEEIDSNADPEAYLDVWVTAQKDLLGPKDFECVFQAALDSILNDIKNDLEEFGVTYDDWFPESRLVREGLIQEGLDLLTKHGYVYEKNGAQWFRATALGDEKDRVLIRKNGLPTYFAADVAYHLHKFNQGYDQIIDIFGADHHGYIPRIRGFLKGLGKAPEKLHILLVQFAILYRGNEKVSMSTRGGTFVTLRELRHEVGNDAARFFYIMRKPDQHLDFDLELAKSQSNENPVYYIQYAHARICSVFRQLKTTQKNWDRPRGMENLSLLSTNYEKELLATLGRYPEVIKRAAMNYAPHLLAHYLQTLANQFHTYYNAERFLIEDDNLRNARLNLINAVQQIIRNGLTLLGVSAPEEM.

The 'HIGH' region signature appears at 134-144 (ANPTGPLHVGH).

Belongs to the class-I aminoacyl-tRNA synthetase family. Monomer.

Its subcellular location is the cytoplasm. It carries out the reaction tRNA(Arg) + L-arginine + ATP = L-arginyl-tRNA(Arg) + AMP + diphosphate. The protein is Arginine--tRNA ligase of Coxiella burnetii (strain RSA 493 / Nine Mile phase I).